The following is a 364-amino-acid chain: O-methyltransferase ZRP4 (364 aa).

Gly208, Asp231, Asp251, Met252, and Lys265 together coordinate S-adenosyl-L-methionine. His269 functions as the Proton acceptor in the catalytic mechanism.

The protein belongs to the class I-like SAM-binding methyltransferase superfamily. Cation-independent O-methyltransferase family. COMT subfamily. As to quaternary structure, homodimer. As to expression, accumulates preferentially in the roots and is located predominantly in the region of the endodermis, low levels are seen in the leaves, stems and other shoot organs.

May be involved in the O-methylation of suberin phenylpropanoid precursors. This chain is O-methyltransferase ZRP4 (ZRP4), found in Zea mays (Maize).